A 136-amino-acid chain; its full sequence is Small cardioactive peptides (136 aa).

The first 24 residues, M1–A24, serve as a signal peptide directing secretion. Methionine amide occurs at positions 33 and 46. A propeptide spans S49–Q135 (carboxy-terminal peptide).

It belongs to the SCP family. Post-translationally, contains three disulfide bonds. Highly expressed in the buccal ganglion.

The protein resides in the secreted. Involved in the stimulation of contractile activity in the gut, the increase of the amplitude of the heart beat, and enhancement of the contractile response of the radula closer muscle. This is Small cardioactive peptides from Aplysia californica (California sea hare).